The primary structure comprises 631 residues: PTS system beta-glucoside-specific EIIBCA component (631 aa).

Residues 1–86 (MNYETLASEI…LSLDGMARFS (86 aa)) enclose the PTS EIIB type-1 domain. Catalysis depends on Cys-26, which acts as the Phosphocysteine intermediate; for EIIB activity. Residues 105–466 (DIISSIFTPF…DETQPAAADS (362 aa)) enclose the PTS EIIC type-1 domain. 10 consecutive transmembrane segments (helical) span residues 120–140 (ATGI…ISES), 146–166 (LLFA…GYTA), 175–195 (FTTL…AFNA), 206–226 (FLGI…ILFA), 248–268 (FFTP…LIGP), 295–315 (VMGA…FVPL), 328–348 (LLPL…GVLL), 358–378 (IAGS…VYGV), 385–405 (PFIF…YAHT), and 434–454 (AVIG…SFGV). The region spanning 501 to 605 (DRTFASGVMG…DLTTPIVITN (105 aa)) is the PTS EIIA type-1 domain. The active-site Tele-phosphohistidine intermediate; for EIIA activity is the His-553.

Its subcellular location is the cell inner membrane. The phosphoenolpyruvate-dependent sugar phosphotransferase system (sugar PTS), a major carbohydrate active -transport system, catalyzes the phosphorylation of incoming sugar substrates concomitantly with their translocation across the cell membrane. This system is involved in beta-glucoside transport. Functionally, acts both as a kinase and as a phosphatase on ArbG. This is PTS system beta-glucoside-specific EIIBCA component (arbF) from Dickeya chrysanthemi (Pectobacterium chrysanthemi).